The following is a 281-amino-acid chain: 2-dehydro-3-deoxyphosphooctonate aldolase (281 aa).

The protein belongs to the KdsA family.

Its subcellular location is the cytoplasm. It carries out the reaction D-arabinose 5-phosphate + phosphoenolpyruvate + H2O = 3-deoxy-alpha-D-manno-2-octulosonate-8-phosphate + phosphate. It functions in the pathway carbohydrate biosynthesis; 3-deoxy-D-manno-octulosonate biosynthesis; 3-deoxy-D-manno-octulosonate from D-ribulose 5-phosphate: step 2/3. It participates in bacterial outer membrane biogenesis; lipopolysaccharide biosynthesis. This chain is 2-dehydro-3-deoxyphosphooctonate aldolase, found in Pseudomonas savastanoi pv. phaseolicola (strain 1448A / Race 6) (Pseudomonas syringae pv. phaseolicola (strain 1448A / Race 6)).